A 412-amino-acid polypeptide reads, in one-letter code: Gamma-glutamyl phosphate reductase (412 aa).

It belongs to the gamma-glutamyl phosphate reductase family.

Its subcellular location is the cytoplasm. The catalysed reaction is L-glutamate 5-semialdehyde + phosphate + NADP(+) = L-glutamyl 5-phosphate + NADPH + H(+). It functions in the pathway amino-acid biosynthesis; L-proline biosynthesis; L-glutamate 5-semialdehyde from L-glutamate: step 2/2. Its function is as follows. Catalyzes the NADPH-dependent reduction of L-glutamate 5-phosphate into L-glutamate 5-semialdehyde and phosphate. The product spontaneously undergoes cyclization to form 1-pyrroline-5-carboxylate. This chain is Gamma-glutamyl phosphate reductase, found in Streptococcus suis (strain 98HAH33).